We begin with the raw amino-acid sequence, 1350 residues long: Ubiquitin carboxyl-terminal hydrolase 47 (1350 aa).

A disordered region spans residues 111 to 138; it reads DGEQPQLTSDESGTADSSGLDDSSQEKF. Positions 115–132 are enriched in polar residues; sequence PQLTSDESGTADSSGLDD. One can recognise a USP domain in the interval 173–548; it reads VGLVNQAMTC…NAYMLMYRLK (376 aa). The active-site Nucleophile is the cysteine 182. Positions 409–437 are disordered; that stretch reads EDEKSPQTDSCTDSGAENEGSCHSDQMSN. Positions 415-437 are enriched in polar residues; it reads QTDSCTDSGAENEGSCHSDQMSN. The active-site Proton acceptor is histidine 487. Disordered regions lie at residues 815–836 and 859–1000; these read HPRP…PQED and SLQQ…ESGK. The span at 859–877 shows a compositional bias: polar residues; sequence SLQQHQDGGNGDSSKSTEG. Over residues 916–926 the composition is skewed to basic and acidic residues; it reads PEERSDSDVNN. Residues 929-945 show a composition bias toward low complexity; it reads STSSVDSDILSSSHSSD. Basic and acidic residues predominate over residues 973–982; sequence KANDGKKETW. Residues 983–996 show a composition bias toward acidic residues; sequence DTAEEDSGTDSEYD.

It belongs to the peptidase C19 family. USP47 subfamily.

It is found in the cytoplasm. The enzyme catalyses Thiol-dependent hydrolysis of ester, thioester, amide, peptide and isopeptide bonds formed by the C-terminal Gly of ubiquitin (a 76-residue protein attached to proteins as an intracellular targeting signal).. In terms of biological role, ubiquitin-specific protease that specifically deubiquitinates monoubiquitinated DNA polymerase beta (polb), stabilizing polb thereby playing a role in base-excision repair (BER). In Xenopus laevis (African clawed frog), this protein is Ubiquitin carboxyl-terminal hydrolase 47 (usp47).